Reading from the N-terminus, the 137-residue chain is Small ribosomal subunit protein uS12 (137 aa).

2 disordered regions span residues 1–21 (MPTINQLVRKPRKSKIEKSDS) and 34–57 (VHTKIAAPQKRGVATRVGTMTPKK). Asp-102 is subject to 3-methylthioaspartic acid.

Belongs to the universal ribosomal protein uS12 family. In terms of assembly, part of the 30S ribosomal subunit. Contacts proteins S8 and S17. May interact with IF1 in the 30S initiation complex.

In terms of biological role, with S4 and S5 plays an important role in translational accuracy. Interacts with and stabilizes bases of the 16S rRNA that are involved in tRNA selection in the A site and with the mRNA backbone. Located at the interface of the 30S and 50S subunits, it traverses the body of the 30S subunit contacting proteins on the other side and probably holding the rRNA structure together. The combined cluster of proteins S8, S12 and S17 appears to hold together the shoulder and platform of the 30S subunit. The protein is Small ribosomal subunit protein uS12 of Streptococcus uberis (strain ATCC BAA-854 / 0140J).